The chain runs to 285 residues: 2,3,4,5-tetrahydropyridine-2,6-dicarboxylate N-succinyltransferase (285 aa).

Substrate contacts are provided by Arg111 and Asp148.

The protein belongs to the transferase hexapeptide repeat family. Homotrimer.

The protein localises to the cytoplasm. The enzyme catalyses (S)-2,3,4,5-tetrahydrodipicolinate + succinyl-CoA + H2O = (S)-2-succinylamino-6-oxoheptanedioate + CoA. It participates in amino-acid biosynthesis; L-lysine biosynthesis via DAP pathway; LL-2,6-diaminopimelate from (S)-tetrahydrodipicolinate (succinylase route): step 1/3. This Allorhizobium ampelinum (strain ATCC BAA-846 / DSM 112012 / S4) (Agrobacterium vitis (strain S4)) protein is 2,3,4,5-tetrahydropyridine-2,6-dicarboxylate N-succinyltransferase.